A 201-amino-acid chain; its full sequence is UPF0056 membrane protein PYRAB13050 (201 aa).

A run of 6 helical transmembrane segments spans residues 8–28, 49–69, 73–93, 111–131, 140–160, and 181–201; these read FAVL…VPIF, ITVL…FKFF, VDAF…EMLS, VAVI…TTVM, PIVI…LASG, and LILT…AFGI.

Belongs to the UPF0056 (MarC) family.

It localises to the cell membrane. The sequence is that of UPF0056 membrane protein PYRAB13050 from Pyrococcus abyssi (strain GE5 / Orsay).